We begin with the raw amino-acid sequence, 711 residues long: Ribosomal RNA large subunit methyltransferase K/L (711 aa).

The THUMP domain occupies Thr-43–Leu-154.

The protein belongs to the methyltransferase superfamily. RlmKL family.

The protein localises to the cytoplasm. It carries out the reaction guanosine(2445) in 23S rRNA + S-adenosyl-L-methionine = N(2)-methylguanosine(2445) in 23S rRNA + S-adenosyl-L-homocysteine + H(+). The catalysed reaction is guanosine(2069) in 23S rRNA + S-adenosyl-L-methionine = N(2)-methylguanosine(2069) in 23S rRNA + S-adenosyl-L-homocysteine + H(+). Functionally, specifically methylates the guanine in position 2445 (m2G2445) and the guanine in position 2069 (m7G2069) of 23S rRNA. This chain is Ribosomal RNA large subunit methyltransferase K/L, found in Haemophilus influenzae (strain PittGG).